Consider the following 969-residue polypeptide: Protein translocase subunit SecA (969 aa).

ATP-binding positions include Gln99, 117-121 (GEGKT), and Asp631.

The protein belongs to the SecA family. In terms of assembly, monomer and homodimer. Part of the essential Sec protein translocation apparatus which comprises SecA, SecYEG and auxiliary proteins SecDF. Other proteins may also be involved.

The protein localises to the cell inner membrane. Its subcellular location is the cytoplasm. It catalyses the reaction ATP + H2O + cellular proteinSide 1 = ADP + phosphate + cellular proteinSide 2.. Functionally, part of the Sec protein translocase complex. Interacts with the SecYEG preprotein conducting channel. Has a central role in coupling the hydrolysis of ATP to the transfer of proteins into and across the cell membrane, serving as an ATP-driven molecular motor driving the stepwise translocation of polypeptide chains across the membrane. The protein is Protein translocase subunit SecA of Chlamydia abortus (strain DSM 27085 / S26/3) (Chlamydophila abortus).